We begin with the raw amino-acid sequence, 164 residues long: GTP-dependent dephospho-CoA kinase (164 aa).

Positions 40, 41, 42, 59, 61, and 113 each coordinate GTP.

This sequence belongs to the GTP-dependent DPCK family.

It catalyses the reaction 3'-dephospho-CoA + GTP = GDP + CoA + H(+). The protein operates within cofactor biosynthesis; coenzyme A biosynthesis. Functionally, catalyzes the GTP-dependent phosphorylation of the 3'-hydroxyl group of dephosphocoenzyme A to form coenzyme A (CoA). The chain is GTP-dependent dephospho-CoA kinase from Sulfolobus acidocaldarius (strain ATCC 33909 / DSM 639 / JCM 8929 / NBRC 15157 / NCIMB 11770).